The primary structure comprises 337 residues: Zinc finger protein Gfi-1b (337 aa).

The interval 1–20 (MPRSFLVKSKKAHTYHQHRF) is mediates repression of transcription. Residues 1-20 (MPRSFLVKSKKAHTYHQHRF) form an SNAG domain region. C2H2-type zinc fingers lie at residues 170–193 (YHCVKCNKVFSTPHGLEVHVRRSH), 199–221 (FACEVCGKTFGHAVSLEQHTNIH), 227–249 (FECKMCGKTFKRSSTLSTHLLIH), 255–277 (YPCQYCGKRFHQKSDMKKHTYIH), 283–305 (HKCQVCGKAFSQSSNLITHSRKH), and 311–334 (FSCELCAKGFQRKVDLRRHRETQH).

In terms of tissue distribution, expressed in erythroid cells of primitive and definitive lineage and bone marrow cells.

The protein localises to the nucleus. In terms of biological role, essential transcriptional regulator necessary for development and differentiation of erythroid and megakaryocytic lineages. Alters histone methylation by recruiting histone methyltransferase to target genes promoters. Plays a role in heterochromatin formation. This chain is Zinc finger protein Gfi-1b (GFI1B), found in Gallus gallus (Chicken).